Reading from the N-terminus, the 1220-residue chain is Polycomb protein Sfmbt (1220 aa).

The segment at 322-357 (PIQKDGMAVCKRCGAIGVKHTFYTKSRRFCSMACAR) adopts an FCS-type zinc-finger fold. C331, C334, C351, and C355 together coordinate Zn(2+). Disordered regions lie at residues 371-399 (GDQATTSSPDPGAGSESADLPGDQQQSQS) and 464-483 (DATAPGSTEEGASTPNSYLS). Residues 473 to 482 (EGASTPNSYL) are compositionally biased toward polar residues. MBT repeat units lie at residues 536 to 647 (YDWL…LIPP), 655 to 753 (KDWK…LAAP), 761 to 871 (LAGR…VTPP), and 879 to 975 (FTWE…LEGP). Disordered stretches follow at residues 976-1024 (PRVA…IALK) and 1050-1092 (NNQP…AGSG). Basic residues predominate over residues 991 to 1000 (KIQRKRKPKK). The segment covering 1052 to 1068 (QPEEEGDEEDPDADGDG) has biased composition (acidic residues). Polar residues predominate over residues 1071–1082 (STSHISEQSTTQ). A compositionally biased stretch (low complexity) spans 1083–1092 (SSSDLIAGSG). Residues 1140–1203 (WNVYDVSQFL…SDLIAQLKCK (64 aa)) enclose the SAM domain.

In terms of assembly, interacts with pho as a component of the pho-repressive complex (PhoRC).

It localises to the nucleus. Functionally, polycomb group (PcG) protein that binds to the Polycomb response elements (PREs) found in the regulatory regions of many genes. PcG proteins act by forming multiprotein complexes, which are required to maintain the transcriptionally repressive state of homeotic genes throughout development. PcG proteins are not required to initiate repression, but to maintain it during later stages of development. They probably act via the methylation of histones, rendering chromatin heritably changed in its expressibility. Necessary but not sufficient to recruit a functional PcG repressive complex that represses target genes, suggesting that the recruitment of the distinct PRC1 complex is also required to allow a subsequent repression. This chain is Polycomb protein Sfmbt, found in Drosophila melanogaster (Fruit fly).